The following is a 284-amino-acid chain: Aminoglycoside 6-adenylyltransferase (284 aa).

In terms of assembly, homodimer.

It localises to the cytoplasm. It catalyses the reaction streptomycin + ATP = 6-O-adenylylstreptomycin + diphosphate. The enzyme catalyses streptomycin + GTP = 6-O-guanylylstreptomycin + diphosphate. It carries out the reaction streptidine + ATP = 6-O-adenylylstreptidine + diphosphate. Functionally, mediates bacterial resistance to streptomycin. Adenylates streptomycin on the O-6 residue. Adenylates streptidine on the O-6 residue. Does not act on spectinomycin, neomycin-B or kanamycin. Specific for ATP and GTP nucleotides incorporating a purine ring. No reaction with CTP or UTP. The chain is Aminoglycoside 6-adenylyltransferase from Bacillus subtilis (strain 168).